A 96-amino-acid polypeptide reads, in one-letter code: Co-chaperonin GroES (96 aa).

It belongs to the GroES chaperonin family. In terms of assembly, heptamer of 7 subunits arranged in a ring. Interacts with the chaperonin GroEL.

The protein localises to the cytoplasm. Its function is as follows. Together with the chaperonin GroEL, plays an essential role in assisting protein folding. The GroEL-GroES system forms a nano-cage that allows encapsulation of the non-native substrate proteins and provides a physical environment optimized to promote and accelerate protein folding. GroES binds to the apical surface of the GroEL ring, thereby capping the opening of the GroEL channel. The protein is Co-chaperonin GroES of Vibrio atlanticus (strain LGP32) (Vibrio splendidus (strain Mel32)).